The chain runs to 590 residues: Multidrug resistance ABC transporter ATP-binding and permease protein (590 aa).

6 helical membrane passes run 35 to 55 (YLFF…QLQV), 79 to 99 (IALY…LGIF), 150 to 170 (IPQA…MLQM), 176 to 196 (LAMI…MTFG), 261 to 281 (VMML…IYLI), and 292 to 312 (LGMM…ATFF). An ABC transmembrane type-1 domain is found at 38-317 (FVIGIVAGII…VATFFTELAK (280 aa)). One can recognise an ABC transporter domain in the interval 349–584 (LSAHHVDFAY…HPLYAKYVSE (236 aa)). 382-389 (GPSGGGKS) provides a ligand contact to ATP.

This sequence belongs to the ABC transporter superfamily. Multidrug exporter LmrA (TC 3.A.1.117.1) family. Homodimer.

The protein resides in the cell membrane. It carries out the reaction ATP + H2O + xenobioticSide 1 = ADP + phosphate + xenobioticSide 2.. Functionally, efflux transporter for a variety of amphiphilic cationic compounds, including antibiotics. The sequence is that of Multidrug resistance ABC transporter ATP-binding and permease protein (lmrA) from Lactococcus lactis subsp. cremoris (strain MG1363).